The following is a 494-amino-acid chain: Neuronal acetylcholine receptor subunit alpha-6 (494 aa).

The N-terminal stretch at 1–25 (MLTSKGQGFLHGGLCLWLCVFTPFF) is a signal peptide. Residues 26–239 (KGCVGCATEE…ITYSFYIRRL (214 aa)) are Extracellular-facing. Residues Asn54 and Asn171 are each glycosylated (N-linked (GlcNAc...) asparagine). Cystine bridges form between Cys158/Cys172 and Cys222/Cys223. 3 consecutive transmembrane segments (helical) span residues 240-264 (PMFY…VFYL), 272-290 (VTLC…LVIT), and 306-327 (YLLF…VLNI). The Cytoplasmic portion of the chain corresponds to 328–465 (HYRTPTTHTM…WKYVAMVVDR (138 aa)). Ser401 bears the Phosphoserine mark. Residues 466–484 (VFLWVFIIVCVFGTAGLFL) traverse the membrane as a helical segment.

The protein belongs to the ligand-gated ion channel (TC 1.A.9) family. Acetylcholine receptor (TC 1.A.9.1) subfamily. Alpha-6/CHRNA6 sub-subfamily. In terms of assembly, neuronal AChR is composed of two different types of subunits: alpha and non-alpha (beta). CHRNA6/alpha-6 subunit can be combined to CHRNB2/beta-2, CHRNA4/alpha-4 and CHRNB3/beta-3 to give rise to functional receptors. Heteropentamers containing CHRNB3 have an stoichiometry of (CHRNA6:CHRNB2)2:CHRNB3. Interacts with LYPD6.

Its subcellular location is the synaptic cell membrane. The enzyme catalyses Ca(2+)(in) = Ca(2+)(out). It catalyses the reaction K(+)(in) = K(+)(out). It carries out the reaction Na(+)(in) = Na(+)(out). With respect to regulation, activated by a myriad of ligands such as acetylcholine, cytisine and nicotine. CHRNA6 nAChR activity is inhibited by the antagonists alpha-conotoxin MII and PIA, a small disulfide-constrained peptides from cone snails. Component of neuronal acetylcholine receptors (nAChRs) that function as pentameric, ligand-gated cation channels with high calcium permeability among other activities. nAChRs are excitatory neurotrasnmitter receptors formed by a collection of nAChR subunits known to mediate synaptic transmission in the nervous system and the neuromuscular junction. Each nAchR subunit confers differential attributes to channel properties, including activation, deactivation and desensitization kinetics, pH sensitivity, cation permeability, and binding to allosteric modulators. CHRNA6 forms pentameric channels with CHRNB2, CHRNB3 and CHRNA4 that exhibit high sensitivity to ACh and nicotine and are predominantly expressed in only a few brain areas, including dopaminergic neurons, norepirephrine neurons and cells of the visual system. nAChrs containing CHRNA6 subunits mediate endogenous cholinergic modulation of dopamine and gamma-aminobutyric acid (GABA) release in response to nicotine at nerve terminals. The sequence is that of Neuronal acetylcholine receptor subunit alpha-6 (CHRNA6) from Pan troglodytes (Chimpanzee).